Consider the following 156-residue polypeptide: Small ribosomal subunit protein uS7c (156 aa).

It belongs to the universal ribosomal protein uS7 family. Part of the 30S ribosomal subunit.

It is found in the plastid. Its subcellular location is the chloroplast. Its function is as follows. One of the primary rRNA binding proteins, it binds directly to 16S rRNA where it nucleates assembly of the head domain of the 30S subunit. The chain is Small ribosomal subunit protein uS7c (rps7) from Chlorokybus atmophyticus (Soil alga).